The sequence spans 325 residues: Probable cell division protein WhiA (325 aa).

Positions 280–313 (SLKELGNMLEKPLGKSGVNHRLRKIDKIAEELRK) form a DNA-binding region, H-T-H motif.

It belongs to the WhiA family.

Its function is as follows. Involved in cell division and chromosome segregation. This chain is Probable cell division protein WhiA, found in Caldicellulosiruptor bescii (strain ATCC BAA-1888 / DSM 6725 / KCTC 15123 / Z-1320) (Anaerocellum thermophilum).